A 313-amino-acid polypeptide reads, in one-letter code: Solute carrier family 35 member E3 (313 aa).

Helical transmembrane passes span 17–37, 40–60, 77–97, 100–120, 130–147, 153–173, 187–206, 225–245, 252–272, and 275–295; these read GLLL…WIYV, GFPN…GLYV, LLLL…SLQN, IGTY…IQTL, IRLT…NSYY, FLGT…QVWV, LLYY…VPFF, LMVL…YWII, TYNM…YVLF, and PLSI…LAYT.

Belongs to the TPT transporter family. SLC35E subfamily.

It is found in the membrane. Its function is as follows. Putative transporter. The chain is Solute carrier family 35 member E3 (SLC35E3) from Bos taurus (Bovine).